A 365-amino-acid polypeptide reads, in one-letter code: Aminomethyltransferase (365 aa).

This sequence belongs to the GcvT family. The glycine cleavage system is composed of four proteins: P, T, L and H.

The catalysed reaction is N(6)-[(R)-S(8)-aminomethyldihydrolipoyl]-L-lysyl-[protein] + (6S)-5,6,7,8-tetrahydrofolate = N(6)-[(R)-dihydrolipoyl]-L-lysyl-[protein] + (6R)-5,10-methylene-5,6,7,8-tetrahydrofolate + NH4(+). The glycine cleavage system catalyzes the degradation of glycine. In Aeromonas hydrophila subsp. hydrophila (strain ATCC 7966 / DSM 30187 / BCRC 13018 / CCUG 14551 / JCM 1027 / KCTC 2358 / NCIMB 9240 / NCTC 8049), this protein is Aminomethyltransferase.